The following is a 220-amino-acid chain: 7-carboxy-7-deazaguanine synthase (220 aa).

Substrate-binding positions include 16 to 18 (IQG) and arginine 31. The region spanning 22 to 215 (FAGWPCAFVR…LQLHKYIWNP (194 aa)) is the Radical SAM core domain. Residues cysteine 35, cysteine 39, and cysteine 42 each contribute to the [4Fe-4S] cluster site. Residue threonine 44 participates in Mg(2+) binding. Substrate is bound at residue threonine 74. Position 76 (glycine 76) interacts with S-adenosyl-L-methionine.

Belongs to the radical SAM superfamily. 7-carboxy-7-deazaguanine synthase family. As to quaternary structure, homodimer. Requires [4Fe-4S] cluster as cofactor. It depends on S-adenosyl-L-methionine as a cofactor. The cofactor is Mg(2+).

The catalysed reaction is 6-carboxy-5,6,7,8-tetrahydropterin + H(+) = 7-carboxy-7-deazaguanine + NH4(+). It functions in the pathway purine metabolism; 7-cyano-7-deazaguanine biosynthesis. Catalyzes the complex heterocyclic radical-mediated conversion of 6-carboxy-5,6,7,8-tetrahydropterin (CPH4) to 7-carboxy-7-deazaguanine (CDG), a step common to the biosynthetic pathways of all 7-deazapurine-containing compounds. The chain is 7-carboxy-7-deazaguanine synthase from Chlorobaculum tepidum (strain ATCC 49652 / DSM 12025 / NBRC 103806 / TLS) (Chlorobium tepidum).